We begin with the raw amino-acid sequence, 122 residues long: Small ribosomal subunit protein uS13 (122 aa).

The disordered stretch occupies residues 95-122 (NLPVRGQRTHTNARTRKGKAKPIAGKKK).

Belongs to the universal ribosomal protein uS13 family. In terms of assembly, part of the 30S ribosomal subunit. Forms a loose heterodimer with protein S19. Forms two bridges to the 50S subunit in the 70S ribosome.

Functionally, located at the top of the head of the 30S subunit, it contacts several helices of the 16S rRNA. In the 70S ribosome it contacts the 23S rRNA (bridge B1a) and protein L5 of the 50S subunit (bridge B1b), connecting the 2 subunits; these bridges are implicated in subunit movement. Contacts the tRNAs in the A and P-sites. In Methylobacterium nodulans (strain LMG 21967 / CNCM I-2342 / ORS 2060), this protein is Small ribosomal subunit protein uS13.